The primary structure comprises 523 residues: 2-hydroxyisoflavanone synthase (523 aa).

A helical transmembrane segment spans residues 2-22; sequence LVELAITLLVIALFIHLRPTP. C450 contributes to the heme binding site.

Belongs to the cytochrome P450 family. Heme serves as cofactor.

The protein resides in the microsome membrane. The catalysed reaction is (2S)-liquiritigenin + reduced [NADPH--hemoprotein reductase] + O2 = (2R,3S)-2,4',7-trihydroxyisoflavanone + oxidized [NADPH--hemoprotein reductase] + H2O + H(+). The enzyme catalyses (2S)-naringenin + reduced [NADPH--hemoprotein reductase] + O2 = 2-hydroxy-2,3-dihydrogenistein + oxidized [NADPH--hemoprotein reductase] + H2O + H(+). 2-hydroxyisoflavanone synthase, which catalyzes the hydroxylation associated with 1,2-aryl migration of flavanones. Converts liquiritigenin and naringenin into highly unstable precursors of the isoflavones daidzein and genistein. The chain is 2-hydroxyisoflavanone synthase (CYP93C2) from Glycyrrhiza uralensis (Chinese licorice).